A 96-amino-acid polypeptide reads, in one-letter code: Co-chaperonin GroES (96 aa).

The protein belongs to the GroES chaperonin family. In terms of assembly, heptamer of 7 subunits arranged in a ring. Interacts with the chaperonin GroEL.

The protein localises to the cytoplasm. Together with the chaperonin GroEL, plays an essential role in assisting protein folding. The GroEL-GroES system forms a nano-cage that allows encapsulation of the non-native substrate proteins and provides a physical environment optimized to promote and accelerate protein folding. GroES binds to the apical surface of the GroEL ring, thereby capping the opening of the GroEL channel. The protein is Co-chaperonin GroES of Hahella chejuensis (strain KCTC 2396).